The following is an 88-amino-acid chain: UPF0250 protein IL0958 (88 aa).

Belongs to the UPF0250 family.

The protein is UPF0250 protein IL0958 of Idiomarina loihiensis (strain ATCC BAA-735 / DSM 15497 / L2-TR).